The sequence spans 571 residues: Leucine aminopeptidase A2, chloroplastic (571 aa).

The N-terminal 42 residues, 1-42, are a transit peptide targeting the chloroplast; sequence MATLRVSSLFASSSSSLHSNPSVFTKYQSSPKWAFSFPVTPL. 2 residues coordinate Mg(2+): Lys342 and Asp347. The active site involves Lys354. 3 residues coordinate Mg(2+): Asp367, Asp427, and Glu429. Residue Arg431 is part of the active site.

It belongs to the peptidase M17 family. As to quaternary structure, homohexamer (dimer of homotrimers). Mg(2+) serves as cofactor. In terms of tissue distribution, expressed during floral development. Expressed in healthy and senescent leaves, cotyledons (emergence from seed coats), pistils, sepals, petals, stamens, and floral buds (at protein level).

The protein localises to the plastid. The protein resides in the chloroplast. It catalyses the reaction Release of an N-terminal amino acid, Xaa-|-Yaa-, in which Xaa is preferably Leu, but may be other amino acids including Pro although not Arg or Lys, and Yaa may be Pro. Amino acid amides and methyl esters are also readily hydrolyzed, but rates on arylamides are exceedingly low.. The catalysed reaction is Release of N-terminal proline from a peptide.. In terms of biological role, catalyzes the removal of unsubstituted N-terminal amino acids from various peptides. When associated as homohexamer, catalyzes the proteolyzes of Xaa-Leu dipeptides. Possesses leucine aminopeptidase activity against the model substrate leucine-amido methyl coumarin. Presumably involved in the processing and regular turnover of intracellular proteins. Regulates wound signaling and has a role in insect defense. Functions as a molecular chaperone to protect proteins from heat-induced damage. The protein is Leucine aminopeptidase A2, chloroplastic of Solanum lycopersicum (Tomato).